Consider the following 454-residue polypeptide: MSLEIVILAAGQGTRMRSALPKVLHPIAGKPMLGHVIDCARQLQPERIHVVIGHGADLVRERMAADDLNFVLQAEQLGTGHAVAQALPFLSAEQVLILYGDVPLIQLDTLQRLLAQVTPDQLSLLTVDMLDPTGYGRIVRDDQGAVQAIVEHKDATPAQRQIGEINTGILAVPGKRLADWLGRLSNDNAQGEYYLTDVIAMAVGDGLVVASAQPLDAMEVQGVNDRMQQAQLERHYQRLRAEELMRQGVTLLDPQRLDVRGEVSVGRDVLIDVNVVLEGRVVIEDDVRIGPNCVIRDSVLRRGAVIKANSHLEGAELGEGSDAGPFARLRPGSVLGARAHVGNFVELKNARLGEGSKAGHLSYLGDAELGANCNIGAGTITCNYDGANKFRTELGDDVFIGSNNSLVAPLKIGDGATTAAGSTITHEVPAKNLAFGRARQKNLENWKRPEKIRK.

The tract at residues 1-226 (MSLEIVILAA…AMEVQGVNDR (226 aa)) is pyrophosphorylase. UDP-N-acetyl-alpha-D-glucosamine contacts are provided by residues 8 to 11 (LAAG), Lys22, Gln73, 78 to 79 (GT), 99 to 101 (YGD), Gly136, Glu151, Asn166, and Asn224. Asp101 is a binding site for Mg(2+). Asn224 contacts Mg(2+). The interval 227–247 (MQQAQLERHYQRLRAEELMRQ) is linker. The N-acetyltransferase stretch occupies residues 248 to 454 (GVTLLDPQRL…NWKRPEKIRK (207 aa)). 2 residues coordinate UDP-N-acetyl-alpha-D-glucosamine: Arg330 and Lys348. The active-site Proton acceptor is His360. 2 residues coordinate UDP-N-acetyl-alpha-D-glucosamine: Tyr363 and Asn374. Acetyl-CoA is bound by residues Ala377, 383 to 384 (NY), Ser402, Ala420, and Arg437.

The protein in the N-terminal section; belongs to the N-acetylglucosamine-1-phosphate uridyltransferase family. This sequence in the C-terminal section; belongs to the transferase hexapeptide repeat family. As to quaternary structure, homotrimer. It depends on Mg(2+) as a cofactor.

It localises to the cytoplasm. The catalysed reaction is alpha-D-glucosamine 1-phosphate + acetyl-CoA = N-acetyl-alpha-D-glucosamine 1-phosphate + CoA + H(+). The enzyme catalyses N-acetyl-alpha-D-glucosamine 1-phosphate + UTP + H(+) = UDP-N-acetyl-alpha-D-glucosamine + diphosphate. The protein operates within nucleotide-sugar biosynthesis; UDP-N-acetyl-alpha-D-glucosamine biosynthesis; N-acetyl-alpha-D-glucosamine 1-phosphate from alpha-D-glucosamine 6-phosphate (route II): step 2/2. It functions in the pathway nucleotide-sugar biosynthesis; UDP-N-acetyl-alpha-D-glucosamine biosynthesis; UDP-N-acetyl-alpha-D-glucosamine from N-acetyl-alpha-D-glucosamine 1-phosphate: step 1/1. It participates in bacterial outer membrane biogenesis; LPS lipid A biosynthesis. Functionally, catalyzes the last two sequential reactions in the de novo biosynthetic pathway for UDP-N-acetylglucosamine (UDP-GlcNAc). The C-terminal domain catalyzes the transfer of acetyl group from acetyl coenzyme A to glucosamine-1-phosphate (GlcN-1-P) to produce N-acetylglucosamine-1-phosphate (GlcNAc-1-P), which is converted into UDP-GlcNAc by the transfer of uridine 5-monophosphate (from uridine 5-triphosphate), a reaction catalyzed by the N-terminal domain. The chain is Bifunctional protein GlmU from Pseudomonas paraeruginosa (strain DSM 24068 / PA7) (Pseudomonas aeruginosa (strain PA7)).